Reading from the N-terminus, the 346-residue chain is UDP-N-acetylenolpyruvoylglucosamine reductase (346 aa).

Residues 23 to 194 (FDVRARLACR…VSVTFRLPKV (172 aa)) form the FAD-binding PCMH-type domain. Arg-170 is an active-site residue. Ser-246 (proton donor) is an active-site residue. Residue Glu-342 is part of the active site.

It belongs to the MurB family. It depends on FAD as a cofactor.

Its subcellular location is the cytoplasm. It catalyses the reaction UDP-N-acetyl-alpha-D-muramate + NADP(+) = UDP-N-acetyl-3-O-(1-carboxyvinyl)-alpha-D-glucosamine + NADPH + H(+). It functions in the pathway cell wall biogenesis; peptidoglycan biosynthesis. In terms of biological role, cell wall formation. The polypeptide is UDP-N-acetylenolpyruvoylglucosamine reductase (Paraburkholderia phymatum (strain DSM 17167 / CIP 108236 / LMG 21445 / STM815) (Burkholderia phymatum)).